A 238-amino-acid chain; its full sequence is Lactate utilization protein A (238 aa).

Belongs to the LutA/YkgE family.

Functionally, is involved in L-lactate degradation and allows cells to grow with lactate as the sole carbon source. This chain is Lactate utilization protein A, found in Bacillus velezensis (strain DSM 23117 / BGSC 10A6 / LMG 26770 / FZB42) (Bacillus amyloliquefaciens subsp. plantarum).